The chain runs to 373 residues: MSPCPPQQSRNRVIQLSTSELGEMELTWQEIMSITELQGLNAPSEPSFEPQAPAPYLGPPPPTTYCPCSIHPDSGFPLPPPPYELPASTSHVPDPPYSYGNMAIPVSKPLSLSGLLSEPLQDPLALLDIGLPAGPPKPQEDPESDSGLSLNYSDAESLELEGTEAGRRRSEYVEMYPVEYPYSLMPNSLAHSNYTLPAAETPLALEPSSGPVRAKPTARGEAGSRDERRALAMKIPFPTDKIVNLPVDDFNELLARYPLTESQLALVRDIRRRGKNKVAAQNCRKRKLETIVQLERELERLTNERERLLRARGEADRTLEVMRQQLTELYRDIFQHLRDESGNSYSPEEYALQQAADGTIFLVPRGTKMEATD.

The tract at residues 1-83 (MSPCPPQQSR…SGFPLPPPPY (83 aa)) is required for interaction with MAPK8. The tract at residues 1–206 (MSPCPPQQSR…PAAETPLALE (206 aa)) is transactivation domain. 2 consecutive short sequence motifs (PXY motif) follow at residues 61 to 65 (PPTTY) and 79 to 83 (PPPPY). The disordered stretch occupies residues 127–150 (LDIGLPAGPPKPQEDPESDSGLSL). The residue at position 157 (serine 157) is a Phosphoserine; by MAPK8. The residue at position 170 (serine 170) is a Phosphoserine; by PKA. The interval 205–226 (LEPSSGPVRAKPTARGEAGSRD) is disordered. Residues 266 to 329 (LVRDIRRRGK…EVMRQQLTEL (64 aa)) form the bZIP domain. The interval 268–287 (RDIRRRGKNKVAAQNCRKRK) is basic motif. A leucine-zipper region spans residues 291 to 298 (IVQLEREL). A Glycyl lysine isopeptide (Lys-Gly) (interchain with G-Cter in SUMO1) cross-link involves residue lysine 368.

It belongs to the bZIP family. CNC subfamily. Homodimer; can bind DNA as a homodimer. Erythroid transcription activator nuclear factor erythroid-derived 2 (NF-E2), composed of a heterodimer of NFE2 and MAFK, possesses transactivation activity on beta-globin. Also forms high affinity heterodimer with MAFG; the interaction promotes erythropoiesis. Interacts (via the PXY motif 1) with ITCH (via the WW 1 domain); the interaction promotes 'Lys63'-linked ubiquitination of NFE2, translocates it to the cytoplasm and inhibits its transactivation activity. Interacts with KMT2D/MLL2; the interaction promotes transactivation of the beta-globin locus. Interacts with MAPK8 (phosphorylated form); the interaction leads to phosphorylation of NFE2 in undifferentiated cells. Phosphorylated on serine residues. In undifferentiated erythrocytes, phosphorylated by MAPK8 which then leads to ubiquitination and protein degradation. Post-translationally, sumoylated. Sumoylation is required for translocation to nuclear bodies PODs, anchoring to the gene loci, and transactivation of the beta-globin gene. In terms of processing, ubiquitinated mainly by 'Lys63'-linked ubiquitin. Polyubiquitination with 'Lys63'-linked ubiquitin by ITCH retains NFE2 in the cytoplasm preventing its transactivation activity. In undifferentiated erythrocyte, ubiquitinated after MAPK8-mediatd phosphorylation leading to protein degradation. Expressed in hematopoietic cells and also in colon and testis.

It is found in the nucleus. Its subcellular location is the PML body. The protein resides in the cytoplasm. Its function is as follows. Component of the NF-E2 complex essential for regulating erythroid and megakaryocytic maturation and differentiation. Binds to the hypersensitive site 2 (HS2) of the beta-globin control region (LCR). This subunit (NFE2) recognizes the TCAT/C sequence of the AP-1-like core palindrome present in a number of erythroid and megakaryocytic gene promoters. Requires MAFK or other small MAF proteins for binding to the NF-E2 motif. May play a role in all aspects of hemoglobin production from globin and heme synthesis to procurement of iron. This chain is Transcription factor NF-E2 45 kDa subunit (NFE2), found in Homo sapiens (Human).